Reading from the N-terminus, the 472-residue chain is Glutamate--tRNA ligase (472 aa).

The short motif at 18-28 (PSPTGYLHIGG) is the 'HIGH' region element. Over residues 122 to 138 (RARGEKPRYDGRWRPEP) the composition is skewed to basic and acidic residues. The tract at residues 122–150 (RARGEKPRYDGRWRPEPGKTLPVPPSGVQ) is disordered. Positions 250-254 (KLSKR) match the 'KMSKS' region motif. Residue lysine 253 participates in ATP binding.

It belongs to the class-I aminoacyl-tRNA synthetase family. Glutamate--tRNA ligase type 1 subfamily. As to quaternary structure, monomer.

It localises to the cytoplasm. The catalysed reaction is tRNA(Glu) + L-glutamate + ATP = L-glutamyl-tRNA(Glu) + AMP + diphosphate. Catalyzes the attachment of glutamate to tRNA(Glu) in a two-step reaction: glutamate is first activated by ATP to form Glu-AMP and then transferred to the acceptor end of tRNA(Glu). This Thiobacillus denitrificans (strain ATCC 25259 / T1) protein is Glutamate--tRNA ligase.